The sequence spans 1436 residues: Nuclear pore complex protein Nup160 (1436 aa).

Phosphoserine occurs at positions 44, 490, 949, and 1157.

As to quaternary structure, part of the nuclear pore complex (NPC). Forms part of the NUP160 subcomplex in the nuclear pore which is composed of NUP160, NUP133, NUP107 and NUP96. This complex plays a role in RNA export and in tethering NUP98 and NUP153 to the nucleus.

The protein resides in the nucleus. Its subcellular location is the nuclear pore complex. Functions as a component of the nuclear pore complex (NPC). Involved in poly(A)+ RNA transport. In Homo sapiens (Human), this protein is Nuclear pore complex protein Nup160 (NUP160).